A 109-amino-acid polypeptide reads, in one-letter code: Ig kappa chain V region K16-167 (109 aa).

Residues 1-23 (ALVMTQTPSPVSAAVGGTVTISC) form a framework-1 region. The tract at residues 24 to 35 (QASQSVYSNNLS) is complementarity-determining-1. The tract at residues 36-50 (WFQQKPGQPPKLLIY) is framework-2. Residues 51–57 (KASTLAS) form a complementarity-determining-2 region. The framework-3 stretch occupies residues 58–89 (GVPSRFKGSGSGTQFTLPISGVECDDAATYYC). A complementarity-determining-3 region spans residues 90-99 (QGTNTGNNIV). The framework-4 stretch occupies residues 100 to 109 (FGTGTEVVVK).

The sequence is that of Ig kappa chain V region K16-167 from Oryctolagus cuniculus (Rabbit).